Consider the following 1108-residue polypeptide: Retinal guanylyl cyclase 2 (1108 aa).

An N-terminal signal peptide occupies residues 1 to 50 (MFLGPWPFSRLLSWFAISSRLSGQHGLPSSKFLRCLCLLALLPLLRWGQA). At 51-469 (LPYKIGVIGP…CQGGIDPALA (419 aa)) the chain is on the extracellular side. Cys-104 and Cys-132 are disulfide-bonded. A helical transmembrane segment spans residues 470 to 490 (MMVCFALLIALLSINGFAYFI). The Cytoplasmic segment spans residues 491–1108 (RRRINKIQLI…AERQLVRNKP (618 aa)). Positions 532–812 (FQIISEVQSG…DEIFNQFKTF (281 aa)) constitute a Protein kinase domain. One can recognise a Guanylate cyclase domain in the interval 884–1014 (TLYFSDIVGF…DTVNTASRME (131 aa)).

It belongs to the adenylyl cyclase class-4/guanylyl cyclase family. Homodimer. Interacts with RD3; promotes the exit of GUCY2F from the endoplasmic reticulum and its trafficking to the photoreceptor outer segments. Post-translationally, there are 9 conserved cysteine residues in sensory guanylate cyclases, 6 in the extracellular domain, which may be involved in intra- or interchain disulfide bonds. Retina.

Its subcellular location is the membrane. The protein localises to the photoreceptor outer segment membrane. It carries out the reaction GTP = 3',5'-cyclic GMP + diphosphate. Its activity is regulated as follows. Activated by GUCA1B when free calcium ions concentration is low, and inhibited by GUCA1B when free calcium ions concentration is high. Inhibited by RD3. In terms of biological role, responsible for the synthesis of cyclic GMP (cGMP) in rods and cones of photoreceptors. Plays an essential role in phototransduction, by mediating cGMP replenishment. May also participate in the trafficking of membrane-asociated proteins to the photoreceptor outer segment membrane. The protein is Retinal guanylyl cyclase 2 of Mus musculus (Mouse).